The sequence spans 76 residues: Conotoxin VnMEKL-012 (76 aa).

Positions 1 to 18 (MKLTILFLVAAVLMSTQA) are cleaved as a signal peptide. The propeptide occupies 19 to 42 (LIQHDGEKSQKAKMKFLTARTLSA). Intrachain disulfides connect cysteine 49–cysteine 65, cysteine 56–cysteine 70, and cysteine 64–cysteine 74.

Belongs to the conotoxin O2 superfamily. In terms of tissue distribution, expressed by the venom duct.

It is found in the secreted. The chain is Conotoxin VnMEKL-012 from Conus ventricosus (Mediterranean cone).